A 224-amino-acid polypeptide reads, in one-letter code: Phosphoribosylformylglycinamidine synthase subunit PurQ (224 aa).

The region spanning 2–224 (KVTILQFPGT…IKMLQGFLRA (223 aa)) is the Glutamine amidotransferase type-1 domain. Cys86 acts as the Nucleophile in catalysis. Active-site residues include His200 and Glu202.

In terms of assembly, part of the FGAM synthase complex composed of 1 PurL, 1 PurQ and 2 PurS subunits.

It localises to the cytoplasm. The catalysed reaction is N(2)-formyl-N(1)-(5-phospho-beta-D-ribosyl)glycinamide + L-glutamine + ATP + H2O = 2-formamido-N(1)-(5-O-phospho-beta-D-ribosyl)acetamidine + L-glutamate + ADP + phosphate + H(+). It carries out the reaction L-glutamine + H2O = L-glutamate + NH4(+). Its pathway is purine metabolism; IMP biosynthesis via de novo pathway; 5-amino-1-(5-phospho-D-ribosyl)imidazole from N(2)-formyl-N(1)-(5-phospho-D-ribosyl)glycinamide: step 1/2. In terms of biological role, part of the phosphoribosylformylglycinamidine synthase complex involved in the purines biosynthetic pathway. Catalyzes the ATP-dependent conversion of formylglycinamide ribonucleotide (FGAR) and glutamine to yield formylglycinamidine ribonucleotide (FGAM) and glutamate. The FGAM synthase complex is composed of three subunits. PurQ produces an ammonia molecule by converting glutamine to glutamate. PurL transfers the ammonia molecule to FGAR to form FGAM in an ATP-dependent manner. PurS interacts with PurQ and PurL and is thought to assist in the transfer of the ammonia molecule from PurQ to PurL. This chain is Phosphoribosylformylglycinamidine synthase subunit PurQ, found in Sulfurimonas denitrificans (strain ATCC 33889 / DSM 1251) (Thiomicrospira denitrificans (strain ATCC 33889 / DSM 1251)).